The sequence spans 882 residues: Translation initiation factor IF-2 (882 aa).

3 stretches are compositionally biased toward polar residues: residues 38 to 56 (NDSNSFVDLHNNSNKAEYS), 97 to 124 (GGYSQNRDNRTGGYSQNRDNRTGGYSQN), and 140 to 192 (GGYS…NRDS). Disordered stretches follow at residues 38–192 (NDSN…NRDS) and 236–274 (STPAADSENSKELNRKLGEKKKQQQESQKSYKRKKAETE). Residues 243–259 (ENSKELNRKLGEKKKQQ) show a composition bias toward basic and acidic residues. A tr-type G domain is found at 380–553 (EKPPVITIMG…DMMLLKANPS (174 aa)). Residues 389–396 (GHVDHGKT) form a G1 region. 389–396 (GHVDHGKT) serves as a coordination point for GTP. The segment at 414–418 (GITQH) is G2. The G3 stretch occupies residues 435-438 (DTPG). Residues 435 to 439 (DTPGH) and 489 to 492 (NKID) contribute to the GTP site. The tract at residues 489–492 (NKID) is G4. The segment at 525–527 (SAL) is G5.

Belongs to the TRAFAC class translation factor GTPase superfamily. Classic translation factor GTPase family. IF-2 subfamily.

It localises to the cytoplasm. In terms of biological role, one of the essential components for the initiation of protein synthesis. Protects formylmethionyl-tRNA from spontaneous hydrolysis and promotes its binding to the 30S ribosomal subunits. Also involved in the hydrolysis of GTP during the formation of the 70S ribosomal complex. The polypeptide is Translation initiation factor IF-2 (infB) (Borreliella burgdorferi (strain ATCC 35210 / DSM 4680 / CIP 102532 / B31) (Borrelia burgdorferi)).